The primary structure comprises 276 residues: Adenylate kinase (276 aa).

38-43 serves as a coordination point for ATP; that stretch reads GSGKGT. Residues 58 to 87 are NMP; the sequence is STGDMLRAAIEQGTETGKQAKTIMDQGGLV. Residues Thr59, Arg64, 85-87, 113-116, and Gln120 contribute to the AMP site; these read GLV and GFPR. The segment at 154-191 is LID; it reads GRLVHPSSGRSYHREFFPPKVDMIDDITGEPLIQRSDD. ATP is bound by residues Arg155 and 164–165; that span reads SY. AMP is bound by residues Arg188 and Arg199. Lys227 provides a ligand contact to ATP.

It belongs to the adenylate kinase family. AK2 subfamily. In terms of assembly, monomer.

The protein localises to the cytoplasm. It is found in the cytosol. The protein resides in the mitochondrion intermembrane space. It carries out the reaction AMP + ATP = 2 ADP. In terms of biological role, catalyzes the reversible transfer of the terminal phosphate group between ATP and AMP. Plays an important role in cellular energy homeostasis and in adenine nucleotide metabolism. Adenylate kinase activity is critical for regulation of the phosphate utilization and the AMP de novo biosynthesis pathways. This chain is Adenylate kinase (adkA), found in Dictyostelium discoideum (Social amoeba).